The primary structure comprises 165 residues: uncharacterized protein (165 aa).

Residues 76-161 (LEQVESALDD…LKRLIREKLT (86 aa)) form the RCK C-terminal domain.

This is an uncharacterized protein from Bacillus subtilis (strain 168).